Reading from the N-terminus, the 131-residue chain is Small ribosomal subunit protein uS11 (131 aa).

This sequence belongs to the universal ribosomal protein uS11 family. In terms of assembly, part of the 30S ribosomal subunit. Interacts with proteins S7 and S18. Binds to IF-3.

Functionally, located on the platform of the 30S subunit, it bridges several disparate RNA helices of the 16S rRNA. Forms part of the Shine-Dalgarno cleft in the 70S ribosome. The sequence is that of Small ribosomal subunit protein uS11 from Helicobacter pylori (strain ATCC 700392 / 26695) (Campylobacter pylori).